A 375-amino-acid chain; its full sequence is Dual specificity protein phosphatase 4 (375 aa).

Residues 25-143 (SGGRCLLLDC…FASEYPEFCA (119 aa)) form the Rhodanese domain. The 142-residue stretch at 176–317 (GPVEILPFLY…LLQFESQVLA (142 aa)) folds into the Tyrosine-protein phosphatase domain. The active-site Phosphocysteine intermediate is the C261.

The protein belongs to the protein-tyrosine phosphatase family. Non-receptor class dual specificity subfamily.

It localises to the nucleus. The catalysed reaction is O-phospho-L-tyrosyl-[protein] + H2O = L-tyrosyl-[protein] + phosphate. It catalyses the reaction O-phospho-L-seryl-[protein] + H2O = L-seryl-[protein] + phosphate. It carries out the reaction O-phospho-L-threonyl-[protein] + H2O = L-threonyl-[protein] + phosphate. Functionally, regulates mitogenic signal transduction by dephosphorylating both Thr and Tyr residues on MAP kinases ERK1 and ERK2. In Gallus gallus (Chicken), this protein is Dual specificity protein phosphatase 4 (DUSP4).